A 495-amino-acid chain; its full sequence is MFLQIVTSVLATGLLYALISVLQQNRTLSASLPPGPPGHWLFGNAPPRAFPYRHFAELTETYGPVFTLRFGRRIVCVIGRYQAAVDILMKHSAETSDRPRSVAANEIMSKGHRVLMTPAGERLKKYRRALHAFLQPSSSATYKPMQYKNAKNYVLDCLHDGRHHLYHGRKYAASVVMSVAYGKTTPTSYSDPEVLQINKSLARLGAALKPGAYLVDTYPILKYCPGYASHLRRYREEELALITKQANAVRELLAKGEAPPSFTAYLIENQERLGISDDELAYLSGAIFGAGSDTTAAALGIMTMAAACYPEAQARVQAQLDEVVGRDRAPTFEDEDLLPEVTAFVLEAYRWRPVSAGGFSHRATKDVVWNGYVIPAGAEIIGNHWAISRDPEVYPNPEDFKPARWLNEHGRIRNDLKFINFGFGRRVCVGQHVADQSLFINTALVLWAFRISQDAQCPIDTYAFTDTANVHPLPFSLHFEPRVKDMEAMLGAQAE.

A helical membrane pass occupies residues 2-22 (FLQIVTSVLATGLLYALISVL). Asn-25 and Asn-198 each carry an N-linked (GlcNAc...) asparagine glycan. Cys-428 lines the heme pocket.

The protein belongs to the cytochrome P450 family. It depends on heme as a cofactor.

Its subcellular location is the membrane. It functions in the pathway secondary metabolite biosynthesis. Its function is as follows. Cytochrome P450 monooxygenase that is able to use 4-ethoxybenzoic acid as a substrate for oxidation. This Postia placenta (strain ATCC 44394 / Madison 698-R) (Brown rot fungus) protein is Cytochrome P450 monooxygenase 64.